The following is a 481-amino-acid chain: Aspartyl/glutamyl-tRNA(Asn/Gln) amidotransferase subunit B (481 aa).

Belongs to the GatB/GatE family. GatB subfamily. Heterotrimer of A, B and C subunits.

The enzyme catalyses L-glutamyl-tRNA(Gln) + L-glutamine + ATP + H2O = L-glutaminyl-tRNA(Gln) + L-glutamate + ADP + phosphate + H(+). It catalyses the reaction L-aspartyl-tRNA(Asn) + L-glutamine + ATP + H2O = L-asparaginyl-tRNA(Asn) + L-glutamate + ADP + phosphate + 2 H(+). Allows the formation of correctly charged Asn-tRNA(Asn) or Gln-tRNA(Gln) through the transamidation of misacylated Asp-tRNA(Asn) or Glu-tRNA(Gln) in organisms which lack either or both of asparaginyl-tRNA or glutaminyl-tRNA synthetases. The reaction takes place in the presence of glutamine and ATP through an activated phospho-Asp-tRNA(Asn) or phospho-Glu-tRNA(Gln). This chain is Aspartyl/glutamyl-tRNA(Asn/Gln) amidotransferase subunit B, found in Fusobacterium nucleatum subsp. nucleatum (strain ATCC 25586 / DSM 15643 / BCRC 10681 / CIP 101130 / JCM 8532 / KCTC 2640 / LMG 13131 / VPI 4355).